The following is a 258-amino-acid chain: 14-3-3 protein 6 (258 aa).

A disordered region spans residues 238–258; that stretch reads DMQDDGTDEIKEATPKPDDNE. Positions 245–258 are enriched in basic and acidic residues; that stretch reads DEIKEATPKPDDNE.

The protein belongs to the 14-3-3 family. As to quaternary structure, homodimer.

The protein is 14-3-3 protein 6 (TFT6) of Solanum lycopersicum (Tomato).